A 99-amino-acid chain; its full sequence is High mobility group protein I (99 aa).

Positions 1-99 are disordered; that stretch reads MSDSPVKKGR…ADTEEVNSSD (99 aa). Serine 4 is modified (phosphoserine; by CDC2 and MAPK). The segment at residues 7-19 is a DNA-binding region (a.T hook 1); sequence KKGRGRPAKAKPE. The span at 16 to 46 shows a compositional bias: basic and acidic residues; sequence AKPEETASPKAAKKEEKKVEEVPKKIEESTK. Position 23 is a phosphoserine; by MAPK (serine 23). Positions 54-66 form a DNA-binding region, a.T hook 2; that stretch reads KKGRGRPSKGDKA. At serine 73 the chain carries Phosphoserine; by PKC. Positions 74-86 form a DNA-binding region, a.T hook 3; the sequence is GKGRGRPAKNAKK. Positions 90–99 are enriched in acidic residues; it reads ADTEEVNSSD.

Belongs to the HMGA family. Phosphorylated in a cell-cycle dependent manner; substantially reduced in cells that have finished proliferating and are differentiated. Phosphorylation at Ser-4 and Ser-23 results in a 10-fold weakening of DNA-binding activity and altered the mode of protein-DNA interaction.

Its subcellular location is the nucleus. It localises to the nucleolus. The protein localises to the chromosome. Functionally, binds preferentially to the minor groove of A+T rich regions in double-stranded DNA via the second and third DBA-binding domains. It is suggested that these proteins could function in nucleosome phasing and in the 3'-end processing of mRNA transcripts. They are also involved in the transcription regulation of genes containing, or in close proximity to A+T-rich regions. This is High mobility group protein I from Chironomus tentans (Midge).